We begin with the raw amino-acid sequence, 76 residues long: Kappa-actitoxin-Avd4o (76 aa).

Residues 1-19 (MNKALFLSLVVLCAAVVFA) form the signal peptide. A propeptide spanning residues 20–33 (AEDLQKAKHAPFKL) is cleaved from the precursor. 3 disulfides stabilise this stretch: cysteine 37–cysteine 72, cysteine 39–cysteine 65, and cysteine 55–cysteine 73.

The protein belongs to the sea anemone type 3 (BDS) potassium channel toxin family. As to expression, experimental results show no expression in the ectodermal tissue from the distal and proximal tentacles, body wall, and oral disk. Since paralogs are expressed in this tissue, an expression of this toxin in this tissue is probable. The negative results could be explained by the very low abundance of EST sequences.

It localises to the secreted. The protein resides in the nematocyst. Blocks Kv3 voltage-gated potassium channels. Reduces blood pressure. This chain is Kappa-actitoxin-Avd4o, found in Anemonia viridis (Snakelocks anemone).